The primary structure comprises 93 residues: UPF0358 protein BH2626 (93 aa).

This sequence belongs to the UPF0358 family.

This Halalkalibacterium halodurans (strain ATCC BAA-125 / DSM 18197 / FERM 7344 / JCM 9153 / C-125) (Bacillus halodurans) protein is UPF0358 protein BH2626.